The sequence spans 216 residues: MRIGILGGTFDPIHYGHIRPAIEVKHALALDKILLMPNHIPPHKQQPNLTTAQRLKMVADVCSQLDGFELCDIEAKRDTPSYTVVTLEQLKSLHPEHELFFIMGMDSFLQLKSWYEWQRLFDFAHLVVCQRPGWQLDAAHPMQQILTARSHAHQETHEGHAKNTHKNSGQIFPVTITPQDISSTQIREQLAKGEIPVDLLMPVTLDYIQNQQLYLP.

Belongs to the NadD family.

It catalyses the reaction nicotinate beta-D-ribonucleotide + ATP + H(+) = deamido-NAD(+) + diphosphate. The protein operates within cofactor biosynthesis; NAD(+) biosynthesis; deamido-NAD(+) from nicotinate D-ribonucleotide: step 1/1. Functionally, catalyzes the reversible adenylation of nicotinate mononucleotide (NaMN) to nicotinic acid adenine dinucleotide (NaAD). This is Probable nicotinate-nucleotide adenylyltransferase from Shewanella baltica (strain OS195).